The following is a 49-amino-acid chain: U1-theraphotoxin-Lp1b (49 aa).

Cystine bridges form between cysteine 4–cysteine 17, cysteine 8–cysteine 41, cysteine 22–cysteine 24, and cysteine 35–cysteine 46.

Expressed by the venom gland.

It is found in the secreted. Toxin that causes irreversible contractile paralysis into adult Aedes aegypti resulting in 100% mortality after 24 hours. In Lasiodora parahybana (Brazilian salmon pink birdeater), this protein is U1-theraphotoxin-Lp1b.